The chain runs to 1047 residues: Isoleucine--tRNA ligase (1047 aa).

Positions 52–62 (PTANGMPGAHH) match the 'HIGH' region motif. A 'KMSKS' region motif is present at residues 600-604 (KMSKH). Residue lysine 603 coordinates ATP.

The protein belongs to the class-I aminoacyl-tRNA synthetase family. IleS type 2 subfamily. In terms of assembly, monomer. Requires Zn(2+) as cofactor.

Its subcellular location is the cytoplasm. It carries out the reaction tRNA(Ile) + L-isoleucine + ATP = L-isoleucyl-tRNA(Ile) + AMP + diphosphate. Catalyzes the attachment of isoleucine to tRNA(Ile). As IleRS can inadvertently accommodate and process structurally similar amino acids such as valine, to avoid such errors it has two additional distinct tRNA(Ile)-dependent editing activities. One activity is designated as 'pretransfer' editing and involves the hydrolysis of activated Val-AMP. The other activity is designated 'posttransfer' editing and involves deacylation of mischarged Val-tRNA(Ile). The chain is Isoleucine--tRNA ligase from Streptomyces avermitilis (strain ATCC 31267 / DSM 46492 / JCM 5070 / NBRC 14893 / NCIMB 12804 / NRRL 8165 / MA-4680).